The following is a 498-amino-acid chain: Putative F-box/FBD/LRR-repeat protein At4g03220 (498 aa).

The F-box domain occupies 23–71; sequence VDRISNLPDSLNHQILLLLPLKSAAQASLLSKRWRSLFLSLPDLDFTSI. LRR repeat units lie at residues 148–172, 175–200, and 235–259; these read SQNL…SSAR, FQKL…FFTD, and SLQL…CFYS. Residues 416–466 form the FBD domain; sequence YWESQAYELESFLNHLEFVEIHGFVECENEMSLAIFLLRHGKALIKMTLRS.

The chain is Putative F-box/FBD/LRR-repeat protein At4g03220 from Arabidopsis thaliana (Mouse-ear cress).